The primary structure comprises 696 residues: uncharacterized protein (696 aa).

The next 10 helical transmembrane spans lie at 38 to 58 (IISI…NALA), 107 to 127 (LIYV…GYVV), 215 to 235 (AMAS…IFAL), 245 to 265 (SLFT…VVAL), 292 to 312 (TLPF…LIYL), 329 to 349 (VFFV…ILGE), 380 to 400 (FWVT…LTSA), 402 to 422 (FGAA…ACIG), 433 to 453 (FPSL…FLSS), and 457 to 477 (LVVA…IALP). 2 consecutive CBS domains span residues 527–587 (RSPE…PMSS) and 617–674 (IHPT…THTG).

It belongs to the chloride channel (TC 2.A.49) family.

The protein resides in the membrane. Voltage-gated chloride channel. This is an uncharacterized protein from Schizosaccharomyces pombe (strain 972 / ATCC 24843) (Fission yeast).